The chain runs to 221 residues: Small ribosomal subunit protein uS3 (221 aa).

Residues 39–108 (IRKFVKKELF…NVLINIVEVK (70 aa)) form the KH type-2 domain.

Belongs to the universal ribosomal protein uS3 family. Part of the 30S ribosomal subunit. Forms a tight complex with proteins S10 and S14.

In terms of biological role, binds the lower part of the 30S subunit head. Binds mRNA in the 70S ribosome, positioning it for translation. The chain is Small ribosomal subunit protein uS3 from Clostridium beijerinckii (strain ATCC 51743 / NCIMB 8052) (Clostridium acetobutylicum).